The chain runs to 371 residues: uncharacterized protein (371 aa).

Residues 43–148 form the EH domain; that stretch reads DESRVPKFYL…VQAFPTASNP (106 aa). The segment at 179–205 is disordered; that stretch reads SMRKKKESDSKEVSAHNSPAKGAAHDL.

This is an uncharacterized protein from Caenorhabditis elegans.